The chain runs to 165 residues: SsrA-binding protein (165 aa).

The span at 1–10 (MSKKGKKKSK) shows a compositional bias: basic residues. The segment at 1-21 (MSKKGKKKSKNNSSVDGNRRL) is disordered.

Belongs to the SmpB family.

It is found in the cytoplasm. Its function is as follows. Required for rescue of stalled ribosomes mediated by trans-translation. Binds to transfer-messenger RNA (tmRNA), required for stable association of tmRNA with ribosomes. tmRNA and SmpB together mimic tRNA shape, replacing the anticodon stem-loop with SmpB. tmRNA is encoded by the ssrA gene; the 2 termini fold to resemble tRNA(Ala) and it encodes a 'tag peptide', a short internal open reading frame. During trans-translation Ala-aminoacylated tmRNA acts like a tRNA, entering the A-site of stalled ribosomes, displacing the stalled mRNA. The ribosome then switches to translate the ORF on the tmRNA; the nascent peptide is terminated with the 'tag peptide' encoded by the tmRNA and targeted for degradation. The ribosome is freed to recommence translation, which seems to be the essential function of trans-translation. The sequence is that of SsrA-binding protein from Prochlorococcus marinus (strain NATL1A).